A 99-amino-acid polypeptide reads, in one-letter code: Cobalt transport protein CbiN (99 aa).

Transmembrane regions (helical) follow at residues 6 to 26 (VLMI…YSGL) and 68 to 88 (SLLF…FFGY).

Belongs to the CbiN family. As to quaternary structure, forms an energy-coupling factor (ECF) transporter complex composed of an ATP-binding protein (A component, CbiO), a transmembrane protein (T component, CbiQ) and 2 possible substrate-capture proteins (S components, CbiM and CbiN) of unknown stoichimetry.

The protein resides in the cell membrane. The protein operates within cofactor biosynthesis; adenosylcobalamin biosynthesis. In terms of biological role, part of the energy-coupling factor (ECF) transporter complex CbiMNOQ involved in cobalt import. The chain is Cobalt transport protein CbiN from Methanococcus vannielii (strain ATCC 35089 / DSM 1224 / JCM 13029 / OCM 148 / SB).